The primary structure comprises 212 residues: Cyclin-P4-1 (212 aa).

Belongs to the cyclin family. Cyclin U/P subfamily.

This is Cyclin-P4-1 (CYCP4-1) from Oryza sativa subsp. japonica (Rice).